Consider the following 411-residue polypeptide: Putative competence-damage inducible protein (411 aa).

This sequence belongs to the CinA family.

The protein is Putative competence-damage inducible protein of Alkaliphilus metalliredigens (strain QYMF).